Here is a 177-residue protein sequence, read N- to C-terminus: ATP-dependent protease subunit HslV (177 aa).

The active site involves threonine 2. Na(+) is bound by residues glycine 157, cysteine 160, and threonine 163.

Belongs to the peptidase T1B family. HslV subfamily. A double ring-shaped homohexamer of HslV is capped on each side by a ring-shaped HslU homohexamer. The assembly of the HslU/HslV complex is dependent on binding of ATP.

The protein localises to the cytoplasm. It catalyses the reaction ATP-dependent cleavage of peptide bonds with broad specificity.. With respect to regulation, allosterically activated by HslU binding. In terms of biological role, protease subunit of a proteasome-like degradation complex believed to be a general protein degrading machinery. This Aeromonas salmonicida (strain A449) protein is ATP-dependent protease subunit HslV.